Reading from the N-terminus, the 214-residue chain is Probable GTP-binding protein EngB (214 aa).

The region spanning 30–204 (EGFEVAFAGR…YTVLAGWMEL (175 aa)) is the EngB-type G domain. GTP contacts are provided by residues 38 to 45 (GRSNAGKS), 64 to 68 (GRTQL), 82 to 85 (DLPG), 149 to 152 (TKAD), and 182 to 185 (LFSA). S45 and T66 together coordinate Mg(2+).

This sequence belongs to the TRAFAC class TrmE-Era-EngA-EngB-Septin-like GTPase superfamily. EngB GTPase family. Mg(2+) is required as a cofactor.

Functionally, necessary for normal cell division and for the maintenance of normal septation. The chain is Probable GTP-binding protein EngB from Pseudomonas fluorescens (strain Pf0-1).